The following is a 532-amino-acid chain: CTP synthase (532 aa).

Residues M1–L267 are amidoligase domain. S13 contacts CTP. Residue S13 participates in UTP binding. G14 to I19 contacts ATP. Residue Y54 participates in L-glutamine binding. D71 lines the ATP pocket. Mg(2+)-binding residues include D71 and E141. CTP is bound by residues D148–E150, K188–Q193, and K224. Residues K188 to Q193 and K224 contribute to the UTP site. In terms of domain architecture, Glutamine amidotransferase type-1 spans E292–K532. G354 contributes to the L-glutamine binding site. The active-site Nucleophile; for glutamine hydrolysis is the C381. Residues L382–Q385, E405, and R461 contribute to the L-glutamine site. Residues H506 and E508 contribute to the active site.

Belongs to the CTP synthase family. Homotetramer.

It carries out the reaction UTP + L-glutamine + ATP + H2O = CTP + L-glutamate + ADP + phosphate + 2 H(+). It catalyses the reaction L-glutamine + H2O = L-glutamate + NH4(+). The enzyme catalyses UTP + NH4(+) + ATP = CTP + ADP + phosphate + 2 H(+). Its pathway is pyrimidine metabolism; CTP biosynthesis via de novo pathway; CTP from UDP: step 2/2. Allosterically activated by GTP, when glutamine is the substrate; GTP has no effect on the reaction when ammonia is the substrate. The allosteric effector GTP functions by stabilizing the protein conformation that binds the tetrahedral intermediate(s) formed during glutamine hydrolysis. Inhibited by the product CTP, via allosteric rather than competitive inhibition. Catalyzes the ATP-dependent amination of UTP to CTP with either L-glutamine or ammonia as the source of nitrogen. Regulates intracellular CTP levels through interactions with the four ribonucleotide triphosphates. This Mycoplasma capricolum subsp. capricolum (strain California kid / ATCC 27343 / NCTC 10154) protein is CTP synthase.